A 348-amino-acid polypeptide reads, in one-letter code: 3-isopropylmalate dehydrogenase (348 aa).

76–87 (GPKWTDPNNRPE) provides a ligand contact to NAD(+). Substrate-binding residues include arginine 94, arginine 104, arginine 132, and aspartate 217. Residues aspartate 217, aspartate 241, and aspartate 245 each contribute to the Mg(2+) site. 275–287 (GSAPDIAGKNVAN) is an NAD(+) binding site.

It belongs to the isocitrate and isopropylmalate dehydrogenases family. LeuB type 1 subfamily. Homodimer. The cofactor is Mg(2+). Requires Mn(2+) as cofactor.

The protein localises to the cytoplasm. It catalyses the reaction (2R,3S)-3-isopropylmalate + NAD(+) = 4-methyl-2-oxopentanoate + CO2 + NADH. The protein operates within amino-acid biosynthesis; L-leucine biosynthesis; L-leucine from 3-methyl-2-oxobutanoate: step 3/4. Functionally, catalyzes the oxidation of 3-carboxy-2-hydroxy-4-methylpentanoate (3-isopropylmalate) to 3-carboxy-4-methyl-2-oxopentanoate. The product decarboxylates to 4-methyl-2 oxopentanoate. The protein is 3-isopropylmalate dehydrogenase of Staphylococcus aureus (strain NCTC 8325 / PS 47).